The sequence spans 1454 residues: E3 ubiquitin-protein ligase substrate receptor MMS22 (1454 aa).

The tract at residues 159–178 (NSSVQSQRYDSDEEIPKKRH) is disordered. The tract at residues 1201 to 1454 (YDEGDISRNF…SEPFKTFKNT (254 aa)) is required for interaction with MMS1.

This sequence belongs to the MMS22 family. As to quaternary structure, component of a cullin-RING ligase (CRL) composed of 4 subunits: the RING protein HRT1, the cullin RTT101, a linker protein MMS1, and the substrate receptor MMS22. This complex further interacts with RTT107 and CTF4 to form RTT101-MMS1-MMS22-RTT107 and RTT101-MMS1-MMS22-CTF4 complexes respectively. Interacts (via C-ter) with MMS1 (via N-ter). Interacts with RTT107.

It is found in the nucleus. Substrate targeting component of a cullin-RING-based E3 ubiquitin-protein ligase complex RTT101(MMS1-MMS22). RTT101(MMS1-MMS22) promotes fork progression through damaged DNA or natural pause sites by stabilizing replication proteins like the replication fork-pausing complex (FPC) and leading-strand polymerase at stalled replication forks. RTT101(MMS1-MMS22) ubiquitinates the acetylated histones H3K56ac-H4 at lysine residues H3K121, H3K122 and H3K125. Ubiquitination is required for efficient histone deposition during replication-coupled nucleosome assembly, probably by facilitating the transfer of H3-H4 from ASF1 to other chaperones involved in histone deposition. The sequence is that of E3 ubiquitin-protein ligase substrate receptor MMS22 (MMS22) from Saccharomyces cerevisiae (strain ATCC 204508 / S288c) (Baker's yeast).